We begin with the raw amino-acid sequence, 912 residues long: uncharacterized protein (912 aa).

Basic and acidic residues-rich tracts occupy residues isoleucine 20–alanine 32 and histidine 39–threonine 67. The disordered stretch occupies residues isoleucine 20 to aspartate 91. Residues arginine 68–arginine 77 show a composition bias toward basic residues.

This is an uncharacterized protein from Penicillium chrysogenum virus (isolate Caston/2003) (PcV).